The chain runs to 217 residues: Adenylate kinase (217 aa).

Residue 10–15 participates in ATP binding; it reads GIGKGT. An NMP region spans residues 30–59; it reads STGDIFRKNFKENTELGTLSKKFIAQGLLV. AMP contacts are provided by residues Thr-31, Arg-36, 57–59, 85–88, and Gln-92; these read LLV and GFPR. The LID stretch occupies residues 126 to 163; it reads GRRICPECGKVYHIEKIPPKNPGICDKDQKTLIQREDD. Residue Arg-127 coordinates ATP. The Zn(2+) site is built by Cys-130 and Cys-133. An ATP-binding site is contributed by 136 to 137; the sequence is VY. Residues Cys-150 and Asp-153 each coordinate Zn(2+). AMP-binding residues include Arg-160 and Arg-171. Gln-199 provides a ligand contact to ATP.

Belongs to the adenylate kinase family. Monomer.

It is found in the cytoplasm. It catalyses the reaction AMP + ATP = 2 ADP. Its pathway is purine metabolism; AMP biosynthesis via salvage pathway; AMP from ADP: step 1/1. Its function is as follows. Catalyzes the reversible transfer of the terminal phosphate group between ATP and AMP. Plays an important role in cellular energy homeostasis and in adenine nucleotide metabolism. The polypeptide is Adenylate kinase (Aster yellows witches'-broom phytoplasma (strain AYWB)).